Consider the following 183-residue polypeptide: RNA 2',3'-cyclic phosphodiesterase (183 aa).

The active-site Proton donor is histidine 44. 2 consecutive short sequence motifs (HXTX) follow at residues 44–47 (HITL) and 130–133 (HMTL). Histidine 130 functions as the Proton acceptor in the catalytic mechanism.

It belongs to the 2H phosphoesterase superfamily. ThpR family.

The enzyme catalyses a 3'-end 2',3'-cyclophospho-ribonucleotide-RNA + H2O = a 3'-end 2'-phospho-ribonucleotide-RNA + H(+). Its function is as follows. Hydrolyzes RNA 2',3'-cyclic phosphodiester to an RNA 2'-phosphomonoester. The chain is RNA 2',3'-cyclic phosphodiesterase (ytlP) from Bacillus subtilis (strain 168).